The primary structure comprises 540 residues: Chaperonin GroEL 1 (540 aa).

ATP is bound by residues 29–32 (TIGP), 86–90 (DGTTT), Gly415, 479–481 (NAA), and Asp495.

This sequence belongs to the chaperonin (HSP60) family. As to quaternary structure, forms a cylinder of 14 subunits composed of two heptameric rings stacked back-to-back. Interacts with the co-chaperonin GroES.

It is found in the cytoplasm. It catalyses the reaction ATP + H2O + a folded polypeptide = ADP + phosphate + an unfolded polypeptide.. Functionally, together with its co-chaperonin GroES, plays an essential role in assisting protein folding. The GroEL-GroES system forms a nano-cage that allows encapsulation of the non-native substrate proteins and provides a physical environment optimized to promote and accelerate protein folding. This Streptomyces albus G protein is Chaperonin GroEL 1.